The sequence spans 314 residues: Protein SPOROCYTELESS (314 aa).

The span at 1–17 (MATSLFFMSTDQNSVGN) shows a compositional bias: polar residues. Disordered stretches follow at residues 1–20 (MATS…NPND) and 33–62 (GEIR…PTLR). Residues 62 to 70 (RGMGVAKLE) carry the SPL motif. An EAR motif is present at residues 308-314 (IDLSLKL).

This sequence belongs to the NOZZLE family. In terms of assembly, homodimer and heterodimer with SPEARs. Interacts in vitro with YAB1, YAB3 and YAB4. Interacts (via EAR motif) with TPL, TPR1, TPR2, TPR3 and TPR4. Interacts with SPEAR1, SPEAR2, SPEAR3, SPEAR4, TCP1, TCP6, TCP8, TCP9, TCP11, TCP15, TCP20, TCP21 and TCP23. Interacts with TCP2, TCP3, TCP4, TCP5, TCP10, TCP13, TCP17 and TCP24. In terms of tissue distribution, expressed in flower buds. Not found in leaves, siliques and stems. Detected in rosette leaves, stem tissue and seedlings.

The protein resides in the nucleus. Functionally, transcriptional regulator of sporocyte development. Acts as an adapter-like transcriptional repressor recruiting TPL/TPR corepressors to inhibit TCP transcription factors. Required for nucellus and embryo sac development. Plays a central role in patterning both the proximal-distal and the adaxial-abaxial axes during ovule development. Involved in establishing the prospective chalaza of the ovule and in controlling the cell number and the length of the funiculus, and is required for the development of the integuments. Required, with BEL1, for cytokinin-induced PIN1 expression in ovules. Involved in controlling stamen identity. May also regulate the morphology of lateral organs by repressing auxin production. This chain is Protein SPOROCYTELESS, found in Arabidopsis thaliana (Mouse-ear cress).